Reading from the N-terminus, the 652-residue chain is Maternal embryonic leucine zipper kinase (652 aa).

The 253-residue stretch at Tyr13–Leu265 folds into the Protein kinase domain. ATP-binding positions include Ile19–Val27 and Lys42. Asp134 acts as the Proton acceptor in catalysis. Residue Thr169 is modified to Phosphothreonine; by autocatalysis. The residue at position 173 (Ser173) is a Phosphoserine; by autocatalysis. The segment at Val284 to His323 is UBA-like. Residues His328–Val652 are autoinhibitory region. Phosphothreonine occurs at positions 415, 450, 452, 482, and 484. A disordered region spans residues Phe443–Glu492. Residues His472–Thr484 show a composition bias toward basic and acidic residues. Phosphoserine is present on residues Ser499, Ser506, and Ser518. Residues Ser603–Val652 enclose the KA1 domain.

Belongs to the protein kinase superfamily. CAMK Ser/Thr protein kinase family. SNF1 subfamily. Post-translationally, autophosphorylated: autophosphorylation of the T-loop at Thr-169 and Ser-173 is required for activation. Phosphorylated by the maturation promoting factor (MPF), composed of cdk1 and a cyclin-B. Also phosphorylated by some MAPK. Phosphorylated during oocyte maturation. Dephosphorylation destabilizes the protein. In terms of processing, degraded when cells exit mitosis.

Its subcellular location is the cell membrane. The enzyme catalyses L-seryl-[protein] + ATP = O-phospho-L-seryl-[protein] + ADP + H(+). It carries out the reaction L-threonyl-[protein] + ATP = O-phospho-L-threonyl-[protein] + ADP + H(+). Its activity is regulated as follows. Activated by autophosphorylation of the T-loop at Thr-169 and Ser-173: in contrast to other members of the SNF1 subfamily, phosphorylation at Thr-169 is not mediated by STK11/LKB1 but via autophosphorylation instead. Serine/threonine-protein kinase involved in various processes such as cell cycle regulation, self-renewal of stem cells, apoptosis and splicing regulation. Also plays a role in primitive hematopoiesis, possibly by affecting the expression of genes critical for hematopoiesis. Plays a role in cytokinesis during early development. This Xenopus tropicalis (Western clawed frog) protein is Maternal embryonic leucine zipper kinase (melk).